The primary structure comprises 94 residues: Co-chaperonin GroES (94 aa).

The protein belongs to the GroES chaperonin family. As to quaternary structure, heptamer of 7 subunits arranged in a ring. Interacts with the chaperonin GroEL.

Its subcellular location is the cytoplasm. Functionally, together with the chaperonin GroEL, plays an essential role in assisting protein folding. The GroEL-GroES system forms a nano-cage that allows encapsulation of the non-native substrate proteins and provides a physical environment optimized to promote and accelerate protein folding. GroES binds to the apical surface of the GroEL ring, thereby capping the opening of the GroEL channel. This is Co-chaperonin GroES from Exiguobacterium sibiricum (strain DSM 17290 / CCUG 55495 / CIP 109462 / JCM 13490 / 255-15).